Reading from the N-terminus, the 641-residue chain is Chaperone protein DnaK (641 aa).

At Thr-200 the chain carries Phosphothreonine; by autocatalysis. Residues 605–623 (AAEQGGSADAASGNAQASK) show a composition bias toward low complexity. A disordered region spans residues 605 to 627 (AAEQGGSADAASGNAQASKAADD).

Belongs to the heat shock protein 70 family.

Functionally, acts as a chaperone. The sequence is that of Chaperone protein DnaK from Xanthomonas oryzae pv. oryzae (strain MAFF 311018).